Consider the following 417-residue polypeptide: MPLYEGLGSGGEKTAVVIDLGEAFTKCGFAGETGPRCIIPSVIKKAGMPKPIKVVQYNINTEELYSYLKEFIHILYFRHLLVNPRDRRVVVIESVLCPSHFRETLTRVLFKYFEVPSVLLAPSHLMALLTLGINSAMVLDCGYRESLVLPIYEGIPVLNCWGALPLGGKALHKELETQLLEQCTVDTGAAKEQSLPSVMGSIPEGVLEDIKVRTCFVSDLTRGLKIQAAKFNIDGNTERPSPPPNVDYPLDGEKILHVLGSIRDSVVEILFEQDNEEKSVATLILDSLMQCPIDTRKQLAENLVIIGGTSMLPGFLHRLLAEIRYLVEKPKYKKTLGTKTFRIHTPPAKANCVAWLGGAIFGALQDILGSRSVSKEYYNQTGRIPDWCSLNNPPLEMVFDVGKSQPPLMKRAFSTEK.

Belongs to the actin family. As to quaternary structure, subunit of dynactin, a multiprotein complex part of a tripartite complex with dynein and a adapter, such as BICDL1, BICD2 or HOOK3. The dynactin complex is built around ACTR1A/ACTB filament and consists of an actin-related filament composed of a shoulder domain, a pointed end and a barbed end. Its length is defined by its flexible shoulder domain. The soulder is composed of 2 DCTN1 subunits, 4 DCTN2 and 2 DCTN3. The 4 DCNT2 (via N-terminus) bind the ACTR1A filament and act as molecular rulers to determine the length. The pointed end is important for binding dynein-dynactin cargo adapters. Consists of 4 subunits: ACTR10, DCNT4, DCTN5 and DCTN6. The barbed end is composed of a CAPZA1:CAPZB heterodimers, which binds ACTR1A/ACTB filament and dynactin and stabilizes dynactin.

The protein localises to the cytoplasm. It is found in the cytoskeleton. Its function is as follows. Part of the dynactin complex that activates the molecular motor dynein for ultra-processive transport along microtubules. This is Actin-related protein 10 (ACTR10) from Sus scrofa (Pig).